The following is an 88-amino-acid chain: Stannin (88 aa).

Over 1 to 10 the chain is Mitochondrial intermembrane; that stretch reads MSIMDHSPTT. The helical transmembrane segment at 11–31 threads the bilayer; sequence GVVTVIVILIAIAALGALILG. The Cytoplasmic portion of the chain corresponds to 32–88; the sequence is CWCYLRLQRISQSEDEESIVGDGETKEPFLLVQYSAKGPCVERKAKLMTANSPEVHG. 2 positions are modified to phosphoserine: Ser-49 and Ser-83.

Belongs to the stannin family. Monomer.

It is found in the mitochondrion outer membrane. In terms of biological role, plays a role in the toxic effects of organotins. Plays a role in endosomal maturation. The polypeptide is Stannin (Snn) (Mus musculus (Mouse)).